Consider the following 585-residue polypeptide: Pyruvate kinase (585 aa).

A substrate-binding site is contributed by Arg-32. Residues Asn-34, Ser-36, Asp-66, and Thr-67 each coordinate K(+). 34 to 37 provides a ligand contact to ATP; it reads NFSH. ATP contacts are provided by Arg-73 and Lys-156. Glu-222 provides a ligand contact to Mg(2+). Residues Gly-245, Asp-246, and Thr-278 each coordinate substrate. Residue Asp-246 participates in Mg(2+) binding.

It belongs to the pyruvate kinase family. The protein in the C-terminal section; belongs to the PEP-utilizing enzyme family. Homotetramer. It depends on Mg(2+) as a cofactor. Requires K(+) as cofactor.

It catalyses the reaction pyruvate + ATP = phosphoenolpyruvate + ADP + H(+). Its pathway is carbohydrate degradation; glycolysis; pyruvate from D-glyceraldehyde 3-phosphate: step 5/5. The protein is Pyruvate kinase (pyk) of Bacillus licheniformis.